A 370-amino-acid polypeptide reads, in one-letter code: 2-Hydroxyacid oxidase 1 (370 aa).

In terms of domain architecture, FMN hydroxy acid dehydrogenase spans 1 to 365 (MLPRLVCISD…DKTLVRKNPL (365 aa)). Residue Y26 participates in glyoxylate binding. FMN contacts are provided by residues 79-81 (ATA), S108, and Q130. Glyoxylate is bound at residue Y132. Residue T158 coordinates FMN. Residue R167 coordinates glyoxylate. The residue at position 184 (K184) is an N6-succinyllysine. 2 positions are modified to phosphoserine: S194 and S230. Positions 236 and 258 each coordinate FMN. The glyoxylate site is built by H260 and R263. H260 serves as the catalytic Proton acceptor. FMN contacts are provided by residues 291–295 (DGGVR) and 314–315 (GR). The short motif at 368–370 (SKI) is the Microbody targeting signal element.

This sequence belongs to the FMN-dependent alpha-hydroxy acid dehydrogenase family. As to quaternary structure, homotetramer. FMN serves as cofactor. In terms of tissue distribution, liver.

Its subcellular location is the peroxisome matrix. It catalyses the reaction a (2S)-2-hydroxycarboxylate + O2 = a 2-oxocarboxylate + H2O2. The catalysed reaction is glycolate + O2 = glyoxylate + H2O2. It carries out the reaction glyoxylate + O2 + H2O = oxalate + H2O2 + H(+). The enzyme catalyses 2-hydroxyhexadecanoate + O2 = 2-oxohexadecanoate + H2O2. It catalyses the reaction 2-hydroxyoctanoate + O2 = 2-oxooctanoate + H2O2. Its pathway is amino-acid biosynthesis; glycine biosynthesis. Functionally, broad substrate specificity (S)-2-hydroxy-acid oxidase that preferentially oxidizes glycolate. The glyoxylate produced by the oxidation of glycolate can then be utilized by alanine-glyoxylate aminotransferase for the peroxisomal synthesis of glycine; this pathway appears to be an important step for the detoxification of glyoxylate which, if allowed to accumulate, may be metabolized to oxalate with formation of kidney stones. Can also catalyze the oxidation glyoxylate, and long chain hydroxyacids such as 2-hydroxyhexadecanoate and 2-hydroxyoctanoate. Active in vitro with the artificial electron acceptor 2,6-dichlorophenolindophenol (DCIP), but O2 is believed to be the physiological electron acceptor, leading to the production of H2O2. The sequence is that of 2-Hydroxyacid oxidase 1 from Mus musculus (Mouse).